Reading from the N-terminus, the 293-residue chain is MALVSADSRIAELLTELHQLIKQTQEERSRSEHNLVNIQKTHERMQTENKISPYYRTKLRGLYTTAKADAEAECNILRKALDKIAEIKSLLEERRIAAKIAGLYNDSEPPRKTMRRGVLMTLLQQSAMTLPLWIGKPGDKPPPLCGAIPASGDYVAKPGDKVAARVKAVEGDEQWILAEVVSYSHATNKYEVDDIDEEGKERHTLSRRRIIPLPQWKANPETDPEALFQKEQLVLALYPQTTCFYRALIHTPPQRPQDDYSVLFEDTSYADGYSPPLNVAQRYVVACKEPKKK.

Residues 3–88 (LVSADSRIAE…KALDKIAEIK (86 aa)) adopt a coiled-coil conformation. One can recognise an SGF29 C-terminal domain in the interval 152-293 (GDYVAKPGDK…VVACKEPKKK (142 aa)). Histone H3K4me3 N-terminus binding regions lie at residues 194 to 196 (DID) and 240 to 243 (QTTC). A histone H3K4me3 binding region spans residues 264-266 (FED). An N6-acetyllysine modification is found at Lys-288.

It belongs to the SGF29 family. As to quaternary structure, interacts with dimethylated and trimethylated 'Lys-4' of histone H3 (H3K4me2 and H3K4me3), with a preference for the trimethylated form (H3K4me3). Component of some SAGA-type complexes. Component of the ADA2A-containing complex (ATAC), composed of KAT14, KAT2A, TADA2L, TADA3L, ZZ3, MBIP, WDR5, YEATS2, CCDC101 and DR1. Interacts with (methylated) CGAS. Interacts with TADA3L, GCN5L2, SUPT3H and MYC. As to expression, widely expressed with highest levels in testis. Highly expressed in hepatoma and other tumor cell lines.

The protein resides in the nucleus. Chromatin reader component of some histone acetyltransferase (HAT) SAGA-type complexes like the TFTC-HAT, ATAC or STAGA complexes. SGF29 specifically recognizes and binds methylated 'Lys-4' of histone H3 (H3K4me), with a preference for trimethylated form (H3K4me3). In the SAGA-type complexes, SGF29 is required to recruit complexes to H3K4me. Involved in the response to endoplasmic reticulum (ER) stress by recruiting the SAGA complex to H3K4me, thereby promoting histone H3 acetylation and cell survival. Also binds non-histone proteins that are methylated on Lys residues: specifically recognizes and binds CGAS monomethylated on 'Lys-491'. May be involved in MYC-mediated oncogenic transformation. The chain is SAGA-associated factor 29 from Rattus norvegicus (Rat).